A 433-amino-acid polypeptide reads, in one-letter code: Gamma-glutamyl phosphate reductase 1 (433 aa).

This sequence belongs to the gamma-glutamyl phosphate reductase family.

Its subcellular location is the cytoplasm. It catalyses the reaction L-glutamate 5-semialdehyde + phosphate + NADP(+) = L-glutamyl 5-phosphate + NADPH + H(+). It functions in the pathway amino-acid biosynthesis; L-proline biosynthesis; L-glutamate 5-semialdehyde from L-glutamate: step 2/2. Its function is as follows. Catalyzes the NADPH-dependent reduction of L-glutamate 5-phosphate into L-glutamate 5-semialdehyde and phosphate. The product spontaneously undergoes cyclization to form 1-pyrroline-5-carboxylate. The protein is Gamma-glutamyl phosphate reductase 1 of Synechocystis sp. (strain ATCC 27184 / PCC 6803 / Kazusa).